Reading from the N-terminus, the 582-residue chain is DNA mismatch repair protein MutL (582 aa).

It belongs to the DNA mismatch repair MutL/HexB family.

This protein is involved in the repair of mismatches in DNA. It is required for dam-dependent methyl-directed DNA mismatch repair. May act as a 'molecular matchmaker', a protein that promotes the formation of a stable complex between two or more DNA-binding proteins in an ATP-dependent manner without itself being part of a final effector complex. In Acidiphilium cryptum (strain JF-5), this protein is DNA mismatch repair protein MutL.